The primary structure comprises 175 residues: Large ribosomal subunit protein uL16 (175 aa).

It belongs to the universal ribosomal protein uL16 family.

In Caldivirga maquilingensis (strain ATCC 700844 / DSM 13496 / JCM 10307 / IC-167), this protein is Large ribosomal subunit protein uL16.